Here is a 426-residue protein sequence, read N- to C-terminus: Histidine--tRNA ligase (426 aa).

It belongs to the class-II aminoacyl-tRNA synthetase family. As to quaternary structure, homodimer.

It localises to the cytoplasm. The enzyme catalyses tRNA(His) + L-histidine + ATP = L-histidyl-tRNA(His) + AMP + diphosphate + H(+). This is Histidine--tRNA ligase from Streptococcus pyogenes serotype M1.